The primary structure comprises 424 residues: Probable ribonuclease FAU-1 (424 aa).

Belongs to the FAU-1 family.

Its function is as follows. Probable RNase involved in rRNA stability through maturation and/or degradation of precursor rRNAs. Binds to RNA in loop regions with AU-rich sequences. The protein is Probable ribonuclease FAU-1 of Saccharolobus islandicus (strain M.16.27) (Sulfolobus islandicus).